The chain runs to 847 residues: Collagen alpha-1(I) chain (847 aa).

The disordered stretch occupies residues 1 to 847 (GPMGPSGPRG…PGPIGPPGPR (847 aa)). Over residues 20–39 (PQGFQGPPGEPGEPGSSGPM) the composition is skewed to low complexity. Residues 51–65 (NGDDGEAGKPGRPGE) show a composition bias toward basic and acidic residues. S85 carries the post-translational modification Phosphoserine. 2 stretches are compositionally biased toward low complexity: residues 93 to 109 (DAGP…PGEN) and 127 to 145 (PGAS…TGAA). A compositionally biased stretch (pro residues) spans 147–159 (PPGPTGPAGPPGF). Low complexity-rich tracts occupy residues 193–208 (AGAA…DGQP), 219–228 (QGPSGAPGPK), 298–314 (PKGI…DGKT), 334–343 (PGPKGAAGEP), 500–543 (PSGP…KGDA), 551–599 (PTGA…NAGA), and 628–638 (SPGADGPAGAP). Residue S501 is modified to Phosphoserine. Residues 685–695 (PPGPMGPPGIA) are compositionally biased toward pro residues. A compositionally biased stretch (low complexity) spans 697–712 (PPGESGREGSPGAEGS). The span at 731–746 (SGPPGAPGAPGAPGPV) shows a compositional bias: pro residues. The span at 763 to 777 (AGPAGARGPSGPQGP) shows a compositional bias: low complexity. Over residues 778–789 (RGDKGETGEQGD) the composition is skewed to basic and acidic residues. Low complexity predominate over residues 793 to 838 (SGIQGPPGAPGSPGEQGPSGASGPAGPRGPPGSAGSPGKDGINGIP).

This sequence belongs to the fibrillar collagen family. In terms of assembly, trimers of one alpha 2(I) and two alpha 1(I) chains. Prolines at the third position of the tripeptide repeating unit (G-X-Y) are hydroxylated in some or all of the chains. In terms of tissue distribution, forms the fibrils of tendon, ligaments and bones. In bones, the fibrils are mineralized with calcium hydroxyapatite.

It localises to the secreted. It is found in the extracellular space. The protein localises to the extracellular matrix. Functionally, type I collagen is a member of group I collagen (fibrillar forming collagen). The polypeptide is Collagen alpha-1(I) chain (Cyclopes didactylus (Silky anteater)).